The sequence spans 816 residues: Oxysterol-binding protein-related protein 1D (816 aa).

In terms of domain architecture, PH spans 92-229; it reads GAGVAGIMYK…WVEAFQVAKD (138 aa). Residues 290 to 321 adopt a coiled-coil conformation; it reads KHIILLDTLRQLETEKIELEATVVDETKEHDS. Residues 340–362 form a disordered region; the sequence is SASDSEADNESQDGADVESDEDD. Over residues 344 to 362 the composition is skewed to acidic residues; the sequence is SEADNESQDGADVESDEDD. Positions 735–764 form a coiled coil; the sequence is NGEYESANAEKLRLEQLQRQARRLQEKGWK.

The protein belongs to the OSBP family. In terms of tissue distribution, expressed in roots, leaves, stems and flowers.

In terms of biological role, may be involved in the transport of sterols. This Arabidopsis thaliana (Mouse-ear cress) protein is Oxysterol-binding protein-related protein 1D (ORP1D).